We begin with the raw amino-acid sequence, 667 residues long: WD repeat-containing protein 48 homolog (667 aa).

WD repeat units lie at residues Gln26 to Tyr65, His71 to Thr110, Thr113 to Ala152, Gly164 to Lys203, Gly206 to Thr245, Val248 to Leu287, Glu290 to Leu329, and Lys350 to Gln389. The segment at Glu591–Ser615 is disordered.

It belongs to the WD repeat WDR48 family. As to quaternary structure, catalytic component of the Usp12-46 deubiquitylase complex consisting of Usp12-46, Wdr20 and Uaf1; regulatory subunit that, together wtih Wdr20, stabilizes Usp12-46. The Usp12-46 deubiquitylase complex associates with arr/arrow; the interaction leads to deubiquitination and stabilization of arr/arrow.

Regulatory component of the Usp12-46 deubiquitylase complex. activates deubiquitination by increasing the catalytic turnover without increasing the affinity of deubiquitinating enzymes for the substrate. The complex deubiquitylates the wg/wingless-signaling receptor arr/arrow, which stabilizes the receptor and increases its concentration at the cell surface; this enhances the sensitivity of cells to wg/wingless-signal stimulation. This increases the amplitude and spatial range of the signaling response to the wg/wingless morphogen gradient, facilitating the precise concentration-dependent regulation of its target genes. Together with Wdr20 and Usp12-46 required for wg/wingless-mediated signaling in the wing imaginal disc and for wg/wingless-dependent regulation of intestinal stem cell proliferation. The protein is WD repeat-containing protein 48 homolog of Drosophila ananassae (Fruit fly).